Consider the following 194-residue polypeptide: Inosine triphosphate pyrophosphatase (194 aa).

10-15 serves as a coordination point for ITP; the sequence is TSSKKK. Glu37 lines the Mg(2+) pocket. ITP is bound by residues Lys49, 65-66, Lys82, 142-145, Lys166, and 171-172; these read DV, FGWD, and HR.

This sequence belongs to the HAM1 NTPase family. Homodimer. Mg(2+) serves as cofactor. The cofactor is Mn(2+).

The protein localises to the cytoplasm. The catalysed reaction is ITP + H2O = IMP + diphosphate + H(+). It catalyses the reaction dITP + H2O = dIMP + diphosphate + H(+). The enzyme catalyses XTP + H2O = XMP + diphosphate + H(+). Pyrophosphatase that hydrolyzes non-canonical purine nucleotides such as inosine triphosphate (ITP), deoxyinosine triphosphate (dITP) or xanthosine 5'-triphosphate (XTP) to their respective monophosphate derivatives. The enzyme does not distinguish between the deoxy- and ribose forms. Probably excludes non-canonical purines from RNA and DNA precursor pools, thus preventing their incorporation into RNA and DNA and avoiding chromosomal lesions. The sequence is that of Inosine triphosphate pyrophosphatase from Giardia intestinalis (strain ATCC 50803 / WB clone C6) (Giardia lamblia).